The sequence spans 92 residues: Sec-independent protein translocase protein TatA (92 aa).

A helical membrane pass occupies residues 1–21 (MGIFDWKHWIVILVVVVLVFG). Positions 44 to 92 (NDDEKPADPVVNPVPPAQPVHPQATQPITERRTFDVQAEKVEEPTRKDS) are disordered. Residues 72–92 (TERRTFDVQAEKVEEPTRKDS) are compositionally biased toward basic and acidic residues.

This sequence belongs to the TatA/E family. The Tat system comprises two distinct complexes: a TatABC complex, containing multiple copies of TatA, TatB and TatC subunits, and a separate TatA complex, containing only TatA subunits. Substrates initially bind to the TatABC complex, which probably triggers association of the separate TatA complex to form the active translocon.

It is found in the cell inner membrane. Its function is as follows. Part of the twin-arginine translocation (Tat) system that transports large folded proteins containing a characteristic twin-arginine motif in their signal peptide across membranes. TatA could form the protein-conducting channel of the Tat system. This is Sec-independent protein translocase protein TatA from Pseudomonas fluorescens (strain SBW25).